The chain runs to 260 residues: Capsid protein (260 aa).

Residues 3–20 (KRPGDIIISTPVSKVRRR) carry the Bipartite nuclear localization signal motif. The Nuclear localization signal motif lies at 41-55 (KRRSWTYRPMYRKPR). The segment at 69–86 (CEGPCKVQSYEQRDDIKH) is a zinc-finger region. A Nuclear export signal motif is present at residues 102-123 (ITHRVGKRFCVKSIYFLGKVWM). The short motif at 202-251 (KRFFKINSHVTLFIFIQEAAKYENHTENALLLYMACTHASNPVYATMKIR) is the Bipartite nuclear localization signal element.

Belongs to the geminiviridae capsid protein family. As to quaternary structure, homomultimer. Binds to single-stranded and double-stranded viral DNA. Interacts (via nuclear localization signals) with host importin alpha-1a.

It localises to the virion. The protein resides in the host nucleus. In terms of biological role, encapsidates the viral genome into characteristic twinned ('geminate') particles. Binds the genomic viral ssDNA and shuttles it into and out of the cell nucleus. Plays a role in protection of the genome from degradation, virus acquisition and transmission by insect vectors, infectivity, and systemic movement. The CP of monopartite geminiviruses is absolutely essential for virus movement. This chain is Capsid protein, found in Cynanchum acutum (Little mallow).